The sequence spans 294 residues: Mimecan (294 aa).

A signal peptide spans 1 to 19; that stretch reads MKTLQAAFFLVAFVPLVKP. A glycan (N-linked (GlcNAc...) asparagine) is linked at N61. LRR repeat units follow at residues 108 to 127, 128 to 151, 152 to 175, 176 to 195, 196 to 221, 222 to 242, and 243 to 273; these read EAVPPLPKETAYLYARFNKI, KRIAVSDFADITTLRRIDFSGNMI, EEIEDGAFSKLLLLEELSLAENRL, VKLPVLPPKLTTFNANQNRI, KSRGIKNNAFKKLTNLAYLYLGHNAL, ESVPLNLPESLRILHLQHNNI, and TTINDDTFCKSNNTRYIRTRMDEIRMEGNPI. N-linked (GlcNAc...) asparagine glycans are attached at residues N241 and N254. A disulfide bond links C251 and C284.

This sequence belongs to the small leucine-rich proteoglycan (SLRP) family. SLRP class III subfamily. Post-translationally, the composition of the N-linked chains or the substitution of the N-linked sites is different between embryonic and adult tissues. In terms of processing, contains keratan sulfate.

Its subcellular location is the secreted. It localises to the extracellular space. The protein resides in the extracellular matrix. In terms of biological role, induces bone formation in conjunction with TGF-beta-1 or TGF-beta-2. This is Mimecan (OGN) from Gallus gallus (Chicken).